Consider the following 188-residue polypeptide: Elongation factor P (188 aa).

This sequence belongs to the elongation factor P family.

It is found in the cytoplasm. It participates in protein biosynthesis; polypeptide chain elongation. Its function is as follows. Involved in peptide bond synthesis. Stimulates efficient translation and peptide-bond synthesis on native or reconstituted 70S ribosomes in vitro. Probably functions indirectly by altering the affinity of the ribosome for aminoacyl-tRNA, thus increasing their reactivity as acceptors for peptidyl transferase. This Natranaerobius thermophilus (strain ATCC BAA-1301 / DSM 18059 / JW/NM-WN-LF) protein is Elongation factor P.